The following is a 439-amino-acid chain: Probable N-acetylmuramidase (439 aa).

The first 57 residues, 1-57, serve as a signal peptide directing secretion; that stretch reads MPVSRIKVKNRHLKKKAKKPLAFYKPATKFAGAVLIAGTLTTTHELLLQQTSPMVQA. Disordered regions lie at residues 218–241 and 287–320; these read SAGT…TSST and SSSS…PASQ. The LysM 1 domain occupies 241–284; the sequence is TTYTVKSGDTLWGISQKYGISVAQIQSANNLKSTVIYIGQKLVL. Residues 287-319 show a composition bias toward low complexity; that stretch reads SSSSSNTNSSTSSGNSAGTTTPTTSVTPAKPAS. A LysM 2 domain is found at 321–364; it reads TTIKVKSGDTLWGLSVKYKTTIAQLKSWNHLNSDTIFIGQNLIV. A disordered region spans residues 372–393; sequence SSSTGSSSASTSSTSNSSAASN. Residues 395–438 form the LysM 3 domain; that stretch reads SIHKVVKGDTLWGLSQKSGSPIASIKAWNHLSSDTILIGQYLRI.

This sequence belongs to the glycosyl hydrolase 73 family.

It localises to the secreted. The enzyme catalyses Hydrolysis of (1-&gt;4)-beta-linkages between N-acetylmuramic acid and N-acetyl-D-glucosamine residues in a peptidoglycan and between N-acetyl-D-glucosamine residues in chitodextrins.. Functionally, required for cell separation during growth. The polypeptide is Probable N-acetylmuramidase (acmA) (Lactococcus lactis subsp. lactis (strain IL1403) (Streptococcus lactis)).